The sequence spans 244 residues: Complement C1q subcomponent subunit A (244 aa).

An N-terminal signal peptide occupies residues 1–22 (MEAPRGWLVISVLAISLASSVT). Residues 28-94 (APDGTHGSAG…PGPSGPMGPA (67 aa)) form a disordered region. The Collagen-like domain occupies 31 to 109 (GTHGSAGIPG…KGTKGSPGNI (79 aa)). 2 positions are modified to 4-hydroxyproline: Pro-39 and Pro-45. Lys-48 bears the 5-hydroxylysine mark. Lys-48 carries O-linked (Gal...) hydroxylysine glycosylation. A 4-hydroxyproline mark is found at Pro-54 and Pro-57. 5-hydroxylysine is present on Lys-67. The O-linked (Gal...) hydroxylysine glycan is linked to Lys-67. Residues Pro-73, Pro-79, and Pro-85 each carry the 4-hydroxyproline modification. The span at 79-94 (PGRMGYPGPSGPMGPA) shows a compositional bias: low complexity. A 5-hydroxylysine modification is found at Lys-100. O-linked (Gal...) hydroxylysine glycosylation occurs at Lys-100. The C1q domain maps to 110-244 (KDQPRPAFSA…FSGFLIFPSA (135 aa)). Asn-146 is a glycosylation site (N-linked (GlcNAc...) asparagine). A disulfide bridge connects residues Cys-172 and Cys-189. Gln-198 is a binding site for Ca(2+).

In terms of assembly, core component of the complement C1 complex, a calcium-dependent complex composed of 1 molecule of the C1Q subcomplex, 2 molecules of C1R and 2 molecules of C1S. The C1Q subcomplex is composed 18 subunits: 3 chains of C1QA, C1QB, and C1QC trimerize to form 6 collagen-like triple helices connected to six globular ligand-recognition modules (C1q domain). Interacts with CR1 (via Sushi 24 and Sushi 25 domains). Interacts (via C-terminus) with CD33; this interaction activates CD33 inhibitory motifs. O-linked glycans are assumed to be the Glc-Gal disaccharides typically found as secondary modifications of hydroxylated lysines in collagen-like domains.

The protein localises to the secreted. Its subcellular location is the cell surface. With respect to regulation, the C1Q subcomplex is inhibited by sulfated molecules, such as triterpenoid sulfates, heparan sulfate, or chondroitin sulfates. Its function is as follows. Core component of the complement C1 complex, a multiprotein complex that initiates the classical pathway of the complement system, a cascade of proteins that leads to phagocytosis and breakdown of pathogens and signaling that strengthens the adaptive immune system. The classical complement pathway is initiated by the C1Q subcomplex of the C1 complex, which specifically binds IgG or IgM immunoglobulins complexed with antigens, forming antigen-antibody complexes on the surface of pathogens: C1QA, together with C1QB and C1QC, specifically recognizes and binds the Fc regions of IgG or IgM via its C1q domain. Immunoglobulin-binding activates the proenzyme C1R, which cleaves C1S, initiating the proteolytic cascade of the complement system. The C1Q subcomplex is activated by a hexamer of IgG complexed with antigens, while it is activated by a pentameric IgM. The C1Q subcomplex also recognizes and binds phosphatidylserine exposed on the surface of cells undergoing programmed cell death, possibly promoting activation of the complement system. This chain is Complement C1q subcomponent subunit A (C1QA), found in Bos taurus (Bovine).